A 314-amino-acid polypeptide reads, in one-letter code: Putative thiamine biosynthesis protein HI_0357 (314 aa).

Belongs to the NMT1/THI5 family.

Functionally, probably involved in thiamine biosynthesis. In Haemophilus influenzae (strain ATCC 51907 / DSM 11121 / KW20 / Rd), this protein is Putative thiamine biosynthesis protein HI_0357.